The chain runs to 542 residues: Thermosome subunit alpha (542 aa).

This sequence belongs to the TCP-1 chaperonin family. In terms of assembly, forms a Heterooligomeric complex of two stacked eight-membered rings.

Molecular chaperone; binds unfolded polypeptides in vitro, and has a weak ATPase activity. The polypeptide is Thermosome subunit alpha (thsA) (Methanothermobacter thermautotrophicus (strain ATCC 29096 / DSM 1053 / JCM 10044 / NBRC 100330 / Delta H) (Methanobacterium thermoautotrophicum)).